The sequence spans 81 residues: Small ribosomal subunit protein bS18 (81 aa).

Belongs to the bacterial ribosomal protein bS18 family. Part of the 30S ribosomal subunit. Forms a tight heterodimer with protein bS6.

Functionally, binds as a heterodimer with protein bS6 to the central domain of the 16S rRNA, where it helps stabilize the platform of the 30S subunit. The protein is Small ribosomal subunit protein bS18 of Syntrophobacter fumaroxidans (strain DSM 10017 / MPOB).